Reading from the N-terminus, the 217-residue chain is MNQSLLSPFGDAITRVEAALTALRAGQGVLVVDDEDRENEGDLIYSAEHLTQEQMALLIRECSGIVCLCLTDERVKQLELPPMVEDNSSQYGTAFTVSIEAKVGVTTGVSAADRVTTIKAAIADDAKPSDLARPGHVYPLRAQPGGVLTRRGHTEGTIDLMKLAGLKPAGVLCEVTNVNGTMARLPEIIAFGEQHKMPVLTIEDIVCYRKSLLEKAS.

Residues 37-38 (RE), Asp42, 150-154 (RRGHT), and Glu174 each bind D-ribulose 5-phosphate. Position 38 (Glu38) interacts with Mg(2+). A Mg(2+)-binding site is contributed by His153.

It belongs to the DHBP synthase family. Homodimer. Mg(2+) is required as a cofactor. Requires Mn(2+) as cofactor.

The enzyme catalyses D-ribulose 5-phosphate = (2S)-2-hydroxy-3-oxobutyl phosphate + formate + H(+). It participates in cofactor biosynthesis; riboflavin biosynthesis; 2-hydroxy-3-oxobutyl phosphate from D-ribulose 5-phosphate: step 1/1. Its function is as follows. Catalyzes the conversion of D-ribulose 5-phosphate to formate and 3,4-dihydroxy-2-butanone 4-phosphate. The protein is 3,4-dihydroxy-2-butanone 4-phosphate synthase of Shewanella loihica (strain ATCC BAA-1088 / PV-4).